Consider the following 540-residue polypeptide: DEAD-box ATP-dependent RNA helicase 57 (540 aa).

Positions Asp-24–Asp-73 are disordered. Over residues Lys-47 to Arg-64 the composition is skewed to basic residues. Residues Lys-101–Asp-129 are a coiled coil. Residues Glu-146 to Arg-174 carry the Q motif motif. The Helicase ATP-binding domain maps to Ile-177 to Val-347. ATP is bound at residue Ala-190 to Thr-197. Residues Asp-294 to Asp-297 carry the DEAD box motif. The Helicase C-terminal domain maps to Ala-375–Pro-519.

Belongs to the DEAD box helicase family. DDX52/ROK1 subfamily.

It carries out the reaction ATP + H2O = ADP + phosphate + H(+). The protein is DEAD-box ATP-dependent RNA helicase 57 of Oryza sativa subsp. japonica (Rice).